A 221-amino-acid chain; its full sequence is H-2 class II histocompatibility antigen, A-Q alpha chain (221 aa).

An alpha-1 region spans residues 1 to 76; sequence GIVVYQSPGD…KRSNFTPATN (76 aa). Residues 1–183 lie on the Extracellular side of the membrane; the sequence is GIVVYQSPGD…IPAPMSELTE (183 aa). The tract at residues 77–170 is alpha-2; the sequence is EAPQATVFPK…GLDEPVLKHW (94 aa). The 93-residue stretch at 79–171 folds into the Ig-like C1-type domain; that stretch reads PQATVFPKSP…LDEPVLKHWE (93 aa). Cysteine 99 and cysteine 155 form a disulfide bridge. Asparagine 110 is a glycosylation site (N-linked (GlcNAc...) asparagine). A connecting peptide region spans residues 171 to 183; it reads EPEIPAPMSELTE. Residues 184 to 209 form a helical membrane-spanning segment; the sequence is TVVCALGLSVGLVGIVVGTIFIIQGL. Topologically, residues 210–221 are cytoplasmic; that stretch reads RSGGTSRPPGPL.

Belongs to the MHC class II family.

It is found in the membrane. The polypeptide is H-2 class II histocompatibility antigen, A-Q alpha chain (H2-Aa) (Mus musculus (Mouse)).